Reading from the N-terminus, the 347-residue chain is 3',5'-bisphosphate nucleotidase 2 (347 aa).

Aspartate 46 functions as the Proton acceptor in the catalytic mechanism. 4 residues coordinate Mg(2+): glutamate 71, aspartate 134, isoleucine 136, and aspartate 137. The active-site Proton acceptor is threonine 139. Adenosine 3',5'-bisphosphate contacts are provided by threonine 139, serine 255, lysine 258, arginine 272, and aspartate 284. AMP-binding residues include serine 255, lysine 258, arginine 272, and aspartate 284. Aspartate 284 contacts Mg(2+).

Belongs to the inositol monophosphatase superfamily. Requires Mg(2+) as cofactor. As to expression, very low expression in roots, leaves, stems, flowers and siliques.

It carries out the reaction adenosine 3',5'-bisphosphate + H2O = AMP + phosphate. The catalysed reaction is 3'-phosphoadenylyl sulfate + H2O = adenosine 5'-phosphosulfate + phosphate. It catalyses the reaction 1D-myo-inositol 1,4-bisphosphate + H2O = 1D-myo-inositol 4-phosphate + phosphate. It participates in signal transduction; phosphatidylinositol signaling pathway. With respect to regulation, inhibited by Li(+) (IC(50)=10 mM), Na(+) (IC(50)=200 mM) and Ca(2+) (IC(50)=0.03 mM). In terms of biological role, phosphatase that converts adenosine 3'-phosphate 5'-phosphosulfate (PAPS) to adenosine 5'-phosphosulfate (APS) and 3'-phosphoadenosine 5'-phosphate (3'-PAP) to AMP. May regulate the flux of sulfur in the sulfur-activation pathway by converting PAPS to APS. Prevents both the toxicity of PAP on RNA processing enzymes as well as the product inhibition by PAP of sulfate conjugation. Is also able to hydrolyze inositol 1,4-bisphosphate. The polypeptide is 3',5'-bisphosphate nucleotidase 2 (Arabidopsis thaliana (Mouse-ear cress)).